A 201-amino-acid polypeptide reads, in one-letter code: Translation initiation factor IF-3 (201 aa).

The tract at residues 170–201 (TPKSASKKGHTPPKTQVEASKQANESAETEEE) is disordered. Polar residues predominate over residues 182-195 (PKTQVEASKQANES).

Belongs to the IF-3 family. In terms of assembly, monomer.

It localises to the cytoplasm. Functionally, IF-3 binds to the 30S ribosomal subunit and shifts the equilibrium between 70S ribosomes and their 50S and 30S subunits in favor of the free subunits, thus enhancing the availability of 30S subunits on which protein synthesis initiation begins. The protein is Translation initiation factor IF-3 of Porphyromonas gingivalis (strain ATCC BAA-308 / W83).